A 372-amino-acid chain; its full sequence is Fatty acid 2-hydroxylase (372 aa).

Residues 8–86 (AASFTPAEVQ…LEQYYVGELR (79 aa)) enclose the Cytochrome b5 heme-binding domain. Residues His-43 and His-69 each contribute to the heme site. 2 consecutive transmembrane segments (helical) span residues 168–188 (VWYS…WSYY) and 213–233 (SVFI…EYVI). In terms of domain architecture, Fatty acid hydroxylase spans 219–361 (FVLGMLFWTF…TKLWDYFFHT (143 aa)). The Zn(2+) site is built by His-234, His-239, His-257, His-260, and His-261. 2 helical membrane-spanning segments follow: residues 268-288 (SRLV…YVFL) and 290-310 (LILP…GYVL). Zn(2+) contacts are provided by His-315, His-319, His-336, His-339, and His-340.

The protein belongs to the sterol desaturase family. SCS7 subfamily. It depends on Zn(2+) as a cofactor. In terms of tissue distribution, expressed in brain (at protein level). Detected in cerebellum and forebrain. Expression in the white matter is mainly restricted in oligodendrocytes. Expressed in stomach, kidney, skin and testis. Expressed in sebaceous gland.

It localises to the endoplasmic reticulum membrane. The protein resides in the microsome membrane. The catalysed reaction is a 1,2-saturated fatty acid + 2 Fe(II)-[cytochrome b5] + O2 + 2 H(+) = a (R)-2-hydroxy fatty acid + 2 Fe(III)-[cytochrome b5] + H2O. The enzyme catalyses hexadecanoate + 2 Fe(II)-[cytochrome b5] + O2 + 2 H(+) = (R)-2-hydroxyhexadecanoate + 2 Fe(III)-[cytochrome b5] + H2O. It catalyses the reaction octadecanoate + 2 Fe(II)-[cytochrome b5] + O2 + 2 H(+) = (R)-2-hydroxyoctadecanoate + 2 Fe(III)-[cytochrome b5] + H2O. It carries out the reaction docosanoate + 2 Fe(II)-[cytochrome b5] + O2 + 2 H(+) = 2-hydroxydocosanoate + 2 Fe(III)-[cytochrome b5] + H2O. The catalysed reaction is tetracosanoate + 2 Fe(II)-[cytochrome b5] + O2 + 2 H(+) = (R)-2-hydroxytetracosanoate + 2 Fe(III)-[cytochrome b5] + H2O. It participates in sphingolipid metabolism; galactosylceramide biosynthesis. It functions in the pathway lipid metabolism; fatty acid metabolism. Catalyzes the hydroxylation of free fatty acids at the C-2 position to produce 2-hydroxy fatty acids, which are building blocks of sphingolipids and glycosphingolipids common in neural tissue and epidermis. FA2H is stereospecific for the production of (R)-2-hydroxy fatty acids. Plays an essential role in the synthesis of galactosphingolipids of the myelin sheath. Responsible for the synthesis of sphingolipids and glycosphingolipids involved in the formation of epidermal lamellar bodies critical for skin permeability barrier. Participates in the synthesis of glycosphingolipids and a fraction of type II wax diesters in sebaceous gland, specifically regulating hair follicle homeostasis. Involved in the synthesis of sphingolipids of plasma membrane rafts, controlling lipid raft mobility and trafficking of raft-associated proteins. The chain is Fatty acid 2-hydroxylase from Mus musculus (Mouse).